The primary structure comprises 1187 residues: DNA-directed RNA polymerase subunit beta (1187 aa).

It belongs to the RNA polymerase beta chain family. The RNAP catalytic core consists of 2 alpha, 1 beta, 1 beta' and 1 omega subunit. When a sigma factor is associated with the core the holoenzyme is formed, which can initiate transcription.

The enzyme catalyses RNA(n) + a ribonucleoside 5'-triphosphate = RNA(n+1) + diphosphate. DNA-dependent RNA polymerase catalyzes the transcription of DNA into RNA using the four ribonucleoside triphosphates as substrates. In Streptococcus mutans serotype c (strain ATCC 700610 / UA159), this protein is DNA-directed RNA polymerase subunit beta.